The following is a 96-amino-acid chain: MRQYEIMVILDPTLDERTVAPSLDTFLNVVRGDGGTVSKVEVWGKRRLAYEIAKHTEGIYAVIDVVAAPATVSELDRQLGLNESVLRTKVLRTGAR.

This sequence belongs to the bacterial ribosomal protein bS6 family.

Binds together with bS18 to 16S ribosomal RNA. The chain is Small ribosomal subunit protein bS6 from Mycobacteroides abscessus (strain ATCC 19977 / DSM 44196 / CCUG 20993 / CIP 104536 / JCM 13569 / NCTC 13031 / TMC 1543 / L948) (Mycobacterium abscessus).